The primary structure comprises 144 residues: Universal stress protein A (144 aa).

It belongs to the universal stress protein A family. In terms of assembly, homodimer.

It localises to the cytoplasm. Functionally, required for resistance to DNA-damaging agents. This Escherichia coli O6:H1 (strain CFT073 / ATCC 700928 / UPEC) protein is Universal stress protein A (uspA).